The following is a 241-amino-acid chain: Zinc finger CCHC domain-containing protein 24 (241 aa).

Residues serine 65 and serine 93 each carry the phosphoserine modification. The CCHC-type zinc finger occupies 132-149; the sequence is YLCHLCFNKGHYIKDCPQ.

The chain is Zinc finger CCHC domain-containing protein 24 from Mus musculus (Mouse).